The primary structure comprises 219 residues: Probable nicotinate-nucleotide adenylyltransferase (219 aa).

This sequence belongs to the NadD family.

It carries out the reaction nicotinate beta-D-ribonucleotide + ATP + H(+) = deamido-NAD(+) + diphosphate. The protein operates within cofactor biosynthesis; NAD(+) biosynthesis; deamido-NAD(+) from nicotinate D-ribonucleotide: step 1/1. In terms of biological role, catalyzes the reversible adenylation of nicotinate mononucleotide (NaMN) to nicotinic acid adenine dinucleotide (NaAD). The sequence is that of Probable nicotinate-nucleotide adenylyltransferase from Chromohalobacter salexigens (strain ATCC BAA-138 / DSM 3043 / CIP 106854 / NCIMB 13768 / 1H11).